The primary structure comprises 1353 residues: MSDNRLFTSVETLNLSSPVLEKLKLSGINTLEDFNTFTLEELRLLLQEAFLEVLPILKNFALPRNLQNLDLSEAVINILTELGMEDFQDLLQTKMAVLTKAFETNPLAFQKLNDLFKLYNHFPSISSDKEYGSRDYDYFKIRLAAPEEIRQWSYGEVTSYETINYRTYKPEISGLFCQKIFGPVVDFQCACSKKQVSIKSQFCNKCGVEFTETKVRRERMGHIELQTPIVHTWYLNSSPSRLAILLNIKTKQLEEIVYYVSYVVIDPGKTEFKPKEIITETQYSEALYEFGNAFVALTGAEAVKKLLENLNLEKTIKVLRKSLSENSKQKRESIIKRLEIIESFHQSDNKPEWMVMDVIPVLPPGLRPMVPLDGGRFATTEVNDLYRRILNRNNRLKKQMLQKAPRLIIKNEKRMLQEAVDALFDNAKTSKKNVNNVEKNRPLKSLSEMLRGKQGRFRQNLLGKRVDYSGRSVIIVGPDLEMHQCGVPREMAIILFKPFILKKLQETKGIDKKNANTIYEKMNEEVWNALEEVVKEHPVLLNRAPTLHRLGIQAFDPKLIDGKAIRLHPLVTPAFNADFDGDQMAIYVPLSLEAQAEARLLMLVSNNILDPKNGNPVVTPSQDMVLGNYYLTIEEKKDRTINSYDAAQRTAEHQYKHRNEGAFFADINEAKTAYQNKEIHLHTRIFIKPQAINLSFTEEQRQKYLMTTLGKLIFNDILPPSFPYINEPTQFNLDVKTPDAYFLAPGTNPKQFLKKLPTPKPFNKKFLSMIIACFFKQMKITETSKMLDHIKNLGFKYSTIAGITVSFADINTYSNKQELLQEVEARNIQIETWYNDGFLTDAERRRLVINEWKNIRDEIQEGLMKEFQQDNHIFMMSESGARGSVSNFTQLAGMRGLMNNPKGEIIEVPVKASFREGLKVSEFFISTHGARKGSTDTALKTAESGYLTRRLVDVTQDIVVIKEDCNSDRGFVVEAMISDGKEIVSLKQRIMGRFASCDICHPKTNALIIARNELITESKAQEIITAKIKKVPIRSILTCNCEYGICAKDYGVNLATNKLVEIGEAVGVIAAQSIGEPGTQLTMRTFHTGGVASASDITQGLPRIEELFEVRKPKGKALISELKGKIKKIDKIRSQNPEIVITEENDPDTEHRYILEPNVDILVSKNNSVYPGQKLTSGSVDLKELLRVAGTTEAQKYILEEVQKVYRAQNVYISDKHIEIIIHQMFKQILIIDEGDTQLLPGTEITINNFKKANLKMLEENKLLAVGRPIILGITRSSLRSDSLLSAASFQETTKILIDAAIKGKTDHLYGLKENVIIGGLIPAGTGILETTLFKYPKEPATTSELAEKTNQN.

The unknown stretch occupies residues 1 to 117; sequence MSDNRLFTSV…AFQKLNDLFK (117 aa). The tract at residues 118 to 1353 is DNA-directed RNA polymerase subunit beta'; the sequence is LYNHFPSISS…SELAEKTNQN (1236 aa). Zn(2+) is bound by residues Cys-189, Cys-191, Cys-203, and Cys-206. Mg(2+)-binding residues include Asp-578, Asp-580, and Asp-582.

It belongs to the RNA polymerase beta' chain family. The RNAP catalytic core consists of 2 alpha, 1 beta, 1 beta' and 1 omega subunit. When a sigma factor is associated with the core the holoenzyme is formed, which can initiate transcription. Mg(2+) serves as cofactor. It depends on Zn(2+) as a cofactor.

The catalysed reaction is RNA(n) + a ribonucleoside 5'-triphosphate = RNA(n+1) + diphosphate. In terms of biological role, DNA-dependent RNA polymerase catalyzes the transcription of DNA into RNA using the four ribonucleoside triphosphates as substrates. The sequence is that of DNA-directed RNA polymerase subunit beta' from Onion yellows phytoplasma (strain OY-M).